Consider the following 231-residue polypeptide: NAD(+) ADP-ribosyltransferase (231 aa).

The enzyme catalyses NAD(+) + (ADP-D-ribosyl)n-acceptor = nicotinamide + (ADP-D-ribosyl)n+1-acceptor + H(+).. Activity increases up to 5-6 times with Mg(2+) at 50 uM or higher ion concentration. 3-aminobenzamide (3-ABA) inhibits the activity by up to half and nicotinamide to a lesser extent. Zn(2+) inhibits the activity to half-maximal rate but at 500 uM concentration of the ion. Its function is as follows. Catalyzes auto- and hetero-ADP ribosylation and produces short oligomers by elongating the ADP-ribose chain (up to 6-mer). Binds DNA non-specifically but with high affinity. Forms very stable complexes with circular DNA wherein the circular DNA confers thermostability compared to linear DNA. The sequence is that of NAD(+) ADP-ribosyltransferase from Saccharolobus solfataricus (Sulfolobus solfataricus).